The primary structure comprises 126 residues: Fluoride-specific ion channel FluC (126 aa).

Helical transmembrane passes span 5–25, 34–54, 71–91, and 100–120; these read ILCV…FYFG, YIFI…GFVL, VTGL…NAVF, and FFLN…LGIY. The Na(+) site is built by Gly76 and Thr79.

This sequence belongs to the fluoride channel Fluc/FEX (TC 1.A.43) family.

Its subcellular location is the cell inner membrane. It catalyses the reaction fluoride(in) = fluoride(out). Its activity is regulated as follows. Na(+) is not transported, but it plays an essential structural role and its presence is essential for fluoride channel function. Functionally, fluoride-specific ion channel. Important for reducing fluoride concentration in the cell, thus reducing its toxicity. The chain is Fluoride-specific ion channel FluC from Campylobacter hominis (strain ATCC BAA-381 / DSM 21671 / CCUG 45161 / LMG 19568 / NCTC 13146 / CH001A).